Consider the following 164-residue polypeptide: Ribosome maturation factor RimM (164 aa).

The region spanning 92 to 164 (PDSEYYVANL…FVVIVPPEFI (73 aa)) is the PRC barrel domain.

The protein belongs to the RimM family. In terms of assembly, binds ribosomal protein uS19.

Its subcellular location is the cytoplasm. Its function is as follows. An accessory protein needed during the final step in the assembly of 30S ribosomal subunit, possibly for assembly of the head region. Essential for efficient processing of 16S rRNA. May be needed both before and after RbfA during the maturation of 16S rRNA. It has affinity for free ribosomal 30S subunits but not for 70S ribosomes. The sequence is that of Ribosome maturation factor RimM from Orientia tsutsugamushi (strain Ikeda) (Rickettsia tsutsugamushi).